Reading from the N-terminus, the 216-residue chain is UPF0548 protein (216 aa).

This sequence belongs to the UPF0548 family.

This is UPF0548 protein from Dictyostelium discoideum (Social amoeba).